The primary structure comprises 148 residues: Nucleoside diphosphate kinase 1 (148 aa).

ATP contacts are provided by Lys9, Phe57, Arg85, Thr91, Arg102, and Asn112. Catalysis depends on His115, which acts as the Pros-phosphohistidine intermediate.

This sequence belongs to the NDK family. Mg(2+) serves as cofactor.

The catalysed reaction is a 2'-deoxyribonucleoside 5'-diphosphate + ATP = a 2'-deoxyribonucleoside 5'-triphosphate + ADP. The enzyme catalyses a ribonucleoside 5'-diphosphate + ATP = a ribonucleoside 5'-triphosphate + ADP. Functionally, major role in the synthesis of nucleoside triphosphates other than ATP. The ATP gamma phosphate is transferred to the NDP beta phosphate via a ping-pong mechanism, using a phosphorylated active-site intermediate. In Mesembryanthemum crystallinum (Common ice plant), this protein is Nucleoside diphosphate kinase 1 (NDKP1).